The chain runs to 635 residues: 1-deoxy-D-xylulose-5-phosphate synthase (635 aa).

Thiamine diphosphate-binding positions include histidine 76 and 117-119; that span reads GHS. Residue aspartate 148 participates in Mg(2+) binding. Residues 149-150, asparagine 177, tyrosine 294, and glutamate 379 each bind thiamine diphosphate; that span reads GA. Mg(2+) is bound at residue asparagine 177.

This sequence belongs to the transketolase family. DXPS subfamily. As to quaternary structure, homodimer. Requires Mg(2+) as cofactor. It depends on thiamine diphosphate as a cofactor.

The enzyme catalyses D-glyceraldehyde 3-phosphate + pyruvate + H(+) = 1-deoxy-D-xylulose 5-phosphate + CO2. The protein operates within metabolic intermediate biosynthesis; 1-deoxy-D-xylulose 5-phosphate biosynthesis; 1-deoxy-D-xylulose 5-phosphate from D-glyceraldehyde 3-phosphate and pyruvate: step 1/1. Catalyzes the acyloin condensation reaction between C atoms 2 and 3 of pyruvate and glyceraldehyde 3-phosphate to yield 1-deoxy-D-xylulose-5-phosphate (DXP). The chain is 1-deoxy-D-xylulose-5-phosphate synthase from Neisseria meningitidis serogroup C (strain 053442).